A 476-amino-acid chain; its full sequence is Bifunctional protein HldE (476 aa).

Positions 1–318 (MKPILPDYNS…AEAVHGSQDT (318 aa)) are ribokinase. 195–198 (NMKE) provides a ligand contact to ATP. The active site involves Asp-264. The segment at 344–476 (MTNGCFDILH…IINAIKGGKG (133 aa)) is cytidylyltransferase.

It in the N-terminal section; belongs to the carbohydrate kinase PfkB family. In the C-terminal section; belongs to the cytidylyltransferase family. In terms of assembly, homodimer.

The enzyme catalyses D-glycero-beta-D-manno-heptose 7-phosphate + ATP = D-glycero-beta-D-manno-heptose 1,7-bisphosphate + ADP + H(+). It carries out the reaction D-glycero-beta-D-manno-heptose 1-phosphate + ATP + H(+) = ADP-D-glycero-beta-D-manno-heptose + diphosphate. It participates in nucleotide-sugar biosynthesis; ADP-L-glycero-beta-D-manno-heptose biosynthesis; ADP-L-glycero-beta-D-manno-heptose from D-glycero-beta-D-manno-heptose 7-phosphate: step 1/4. Its pathway is nucleotide-sugar biosynthesis; ADP-L-glycero-beta-D-manno-heptose biosynthesis; ADP-L-glycero-beta-D-manno-heptose from D-glycero-beta-D-manno-heptose 7-phosphate: step 3/4. It functions in the pathway bacterial outer membrane biogenesis; LPS core biosynthesis. Catalyzes the phosphorylation of D-glycero-D-manno-heptose 7-phosphate at the C-1 position to selectively form D-glycero-beta-D-manno-heptose-1,7-bisphosphate. Functionally, catalyzes the ADP transfer from ATP to D-glycero-beta-D-manno-heptose 1-phosphate, yielding ADP-D-glycero-beta-D-manno-heptose. The sequence is that of Bifunctional protein HldE from Vibrio parahaemolyticus serotype O3:K6 (strain RIMD 2210633).